The primary structure comprises 531 residues: Tryptophan biosynthesis protein TRP1 (531 aa).

The indole-3-glycerol phosphate synthase stretch occupies residues 1-254; that stretch reads MGNILEEIAA…TVKDLLQNVT (254 aa). The tract at residues 255–531 is N-(5'-phosphoribosyl)anthranilate isomerase; that stretch reads RHSESGEFAL…TLKIDEETEN (277 aa).

This sequence in the N-terminal section; belongs to the TrpC family. It in the C-terminal section; belongs to the TrpF family.

It catalyses the reaction N-(5-phospho-beta-D-ribosyl)anthranilate = 1-(2-carboxyphenylamino)-1-deoxy-D-ribulose 5-phosphate. It carries out the reaction 1-(2-carboxyphenylamino)-1-deoxy-D-ribulose 5-phosphate + H(+) = (1S,2R)-1-C-(indol-3-yl)glycerol 3-phosphate + CO2 + H2O. The protein operates within amino-acid biosynthesis; L-tryptophan biosynthesis; L-tryptophan from chorismate: step 3/5. It participates in amino-acid biosynthesis; L-tryptophan biosynthesis; L-tryptophan from chorismate: step 4/5. Bifunctional enzyme that catalyzes two sequential steps of tryptophan biosynthetic pathway. In Phytophthora nicotianae (Potato buckeye rot agent), this protein is Tryptophan biosynthesis protein TRP1 (TRP1).